The chain runs to 168 residues: Thiol peroxidase (168 aa).

Residues 19 to 168 (PQAGSKAQAF…YDAALNVLKA (150 aa)) enclose the Thioredoxin domain. C61 functions as the Cysteine sulfenic acid (-SOH) intermediate in the catalytic mechanism. A disulfide bond links C61 and C95.

The protein belongs to the peroxiredoxin family. Tpx subfamily. In terms of assembly, homodimer.

It catalyses the reaction a hydroperoxide + [thioredoxin]-dithiol = an alcohol + [thioredoxin]-disulfide + H2O. Functionally, thiol-specific peroxidase that catalyzes the reduction of hydrogen peroxide and organic hydroperoxides to water and alcohols, respectively. Plays a role in cell protection against oxidative stress by detoxifying peroxides. The polypeptide is Thiol peroxidase (Salmonella typhi).